The following is a 317-amino-acid chain: MSIQNSSARRRSAGRIVYAAGAVLWRPGSADSEGPVEIAVIHRPRYDDWSLPKGKVDPGETAPVGAVREILEETGHRANLGRRLLTVTYPTDSPFRGVKKVHYWAARSTGGEFTPGSEVDELIWLPVPDAMNKLDYAQDRKVLCRFAKHPADTQTVLVVRHGTAGSKAHFSGDDSKRPLDKRGRAQAEALVPQLLAFGATDVYAADRVRCHQTMEPLAAELNVTIHNEPTLTEESYANNPKRGRHRVLQIVEQVGTPVICTQGKVIPDLITWWCERDGVHPDKSRNRKGSTWVLSLSAGRLVTADHIGGALAANVRA.

Residues R15–K148 enclose the Nudix hydrolase domain. Residues R43 to Y46, D48, and K53 to K55 contribute to the substrate site. Positions 53, 69, and 73 each coordinate Mg(2+). A Nudix box motif is present at residues G54–G75. Substrate contacts are provided by Y89, K99, E118, and Y136. E118 is a Mg(2+) binding site.

This sequence belongs to the Nudix hydrolase family. The cofactor is Mg(2+).

It catalyses the reaction 8-oxo-dGTP + H2O = 8-oxo-dGDP + phosphate + H(+). The catalysed reaction is 8-oxo-GTP + H2O = 8-oxo-GDP + phosphate + H(+). Catalyzes the conversion of 8-oxo-dGTP to 8-oxo-dGDP, and 8-oxo-GTP to 8-oxo-GDP. This Mycobacterium tuberculosis (strain CDC 1551 / Oshkosh) protein is 8-oxo-(d)GTP phosphatase.